Here is a 284-residue protein sequence, read N- to C-terminus: Bifunctional protein FolD (284 aa).

NADP(+) contacts are provided by residues 166 to 168, serine 191, and isoleucine 232; that span reads GAS.

This sequence belongs to the tetrahydrofolate dehydrogenase/cyclohydrolase family. Homodimer.

It carries out the reaction (6R)-5,10-methylene-5,6,7,8-tetrahydrofolate + NADP(+) = (6R)-5,10-methenyltetrahydrofolate + NADPH. The catalysed reaction is (6R)-5,10-methenyltetrahydrofolate + H2O = (6R)-10-formyltetrahydrofolate + H(+). The protein operates within one-carbon metabolism; tetrahydrofolate interconversion. In terms of biological role, catalyzes the oxidation of 5,10-methylenetetrahydrofolate to 5,10-methenyltetrahydrofolate and then the hydrolysis of 5,10-methenyltetrahydrofolate to 10-formyltetrahydrofolate. The polypeptide is Bifunctional protein FolD (Neisseria meningitidis serogroup A / serotype 4A (strain DSM 15465 / Z2491)).